The chain runs to 874 residues: Alanine--tRNA ligase (874 aa).

Zn(2+)-binding residues include His563, His567, Cys665, and His669.

It belongs to the class-II aminoacyl-tRNA synthetase family. Requires Zn(2+) as cofactor.

The protein localises to the cytoplasm. It catalyses the reaction tRNA(Ala) + L-alanine + ATP = L-alanyl-tRNA(Ala) + AMP + diphosphate. Catalyzes the attachment of alanine to tRNA(Ala) in a two-step reaction: alanine is first activated by ATP to form Ala-AMP and then transferred to the acceptor end of tRNA(Ala). Also edits incorrectly charged Ser-tRNA(Ala) and Gly-tRNA(Ala) via its editing domain. This is Alanine--tRNA ligase from Histophilus somni (strain 129Pt) (Haemophilus somnus).